The following is a 315-amino-acid chain: Acetaldehyde dehydrogenase 2 (315 aa).

An NAD(+)-binding site is contributed by 15 to 18 (SGNI). Residue C135 is the Acyl-thioester intermediate of the active site. Residues 166–174 (SAGPGTRAN) and N293 contribute to the NAD(+) site.

This sequence belongs to the acetaldehyde dehydrogenase family.

It carries out the reaction acetaldehyde + NAD(+) + CoA = acetyl-CoA + NADH + H(+). In Paraburkholderia phymatum (strain DSM 17167 / CIP 108236 / LMG 21445 / STM815) (Burkholderia phymatum), this protein is Acetaldehyde dehydrogenase 2.